A 167-amino-acid chain; its full sequence is Transcriptional repressor NrdR (167 aa).

A zinc finger spans residues 3–34; that stretch reads CPFCRNPDSRVVDSRMADDGSAIRRRRQCPEC. Residues 46-136 enclose the ATP-cone domain; sequence LSVIKRSGVG…VYQAFESLED (91 aa). The tract at residues 148 to 167 is disordered; it reads AQEDAAERPATPRKPEKTSL.

The protein belongs to the NrdR family. Zn(2+) serves as cofactor.

Negatively regulates transcription of bacterial ribonucleotide reductase nrd genes and operons by binding to NrdR-boxes. The protein is Transcriptional repressor NrdR of Pseudarthrobacter chlorophenolicus (strain ATCC 700700 / DSM 12829 / CIP 107037 / JCM 12360 / KCTC 9906 / NCIMB 13794 / A6) (Arthrobacter chlorophenolicus).